Here is a 422-residue protein sequence, read N- to C-terminus: Probable FBD-associated F-box protein At1g32375 (422 aa).

An F-box domain is found at methionine 1 to isoleucine 53. The 51-residue stretch at cysteine 342–serine 392 folds into the FBD domain.

The chain is Probable FBD-associated F-box protein At1g32375 from Arabidopsis thaliana (Mouse-ear cress).